Consider the following 310-residue polypeptide: D-apiose import binding protein (310 aa).

Residues 1–21 form the signal peptide; the sequence is MKLLKASLVALSLAASTFVYA. D-apiofuranose is bound by residues N35, 111–112, 158–160, R164, N214, D239, and Q260; these read DR and DTN.

This sequence belongs to the bacterial solute-binding protein 2 family.

The protein resides in the periplasm. Functionally, part of an ABC transporter complex involved in D-apiose import. Binds D-apiose, D-ribose and D-ribulose. The chain is D-apiose import binding protein from Actinobacillus succinogenes (strain ATCC 55618 / DSM 22257 / CCUG 43843 / 130Z).